A 544-amino-acid polypeptide reads, in one-letter code: Chaperonin GroEL (544 aa).

ATP contacts are provided by residues Thr-30–Pro-33, Lys-51, Asp-87–Thr-91, Gly-415, and Asp-495.

Belongs to the chaperonin (HSP60) family. Forms a cylinder of 14 subunits composed of two heptameric rings stacked back-to-back. Interacts with the co-chaperonin GroES.

The protein localises to the cytoplasm. It catalyses the reaction ATP + H2O + a folded polypeptide = ADP + phosphate + an unfolded polypeptide.. In terms of biological role, together with its co-chaperonin GroES, plays an essential role in assisting protein folding. The GroEL-GroES system forms a nano-cage that allows encapsulation of the non-native substrate proteins and provides a physical environment optimized to promote and accelerate protein folding. This Bartonella bacilliformis (strain ATCC 35685 / KC583 / Herrer 020/F12,63) protein is Chaperonin GroEL.